A 365-amino-acid polypeptide reads, in one-letter code: UDP-N-acetylglucosamine--N-acetylmuramyl-(pentapeptide) pyrophosphoryl-undecaprenol N-acetylglucosamine transferase (365 aa).

UDP-N-acetyl-alpha-D-glucosamine is bound by residues 19 to 21 (TGG), N131, R170, S201, I255, 274 to 279 (ALTVTE), and Q300.

This sequence belongs to the glycosyltransferase 28 family. MurG subfamily.

The protein localises to the cell inner membrane. It catalyses the reaction di-trans,octa-cis-undecaprenyl diphospho-N-acetyl-alpha-D-muramoyl-L-alanyl-D-glutamyl-meso-2,6-diaminopimeloyl-D-alanyl-D-alanine + UDP-N-acetyl-alpha-D-glucosamine = di-trans,octa-cis-undecaprenyl diphospho-[N-acetyl-alpha-D-glucosaminyl-(1-&gt;4)]-N-acetyl-alpha-D-muramoyl-L-alanyl-D-glutamyl-meso-2,6-diaminopimeloyl-D-alanyl-D-alanine + UDP + H(+). It functions in the pathway cell wall biogenesis; peptidoglycan biosynthesis. Its function is as follows. Cell wall formation. Catalyzes the transfer of a GlcNAc subunit on undecaprenyl-pyrophosphoryl-MurNAc-pentapeptide (lipid intermediate I) to form undecaprenyl-pyrophosphoryl-MurNAc-(pentapeptide)GlcNAc (lipid intermediate II). The sequence is that of UDP-N-acetylglucosamine--N-acetylmuramyl-(pentapeptide) pyrophosphoryl-undecaprenol N-acetylglucosamine transferase from Acinetobacter baumannii (strain ATCC 17978 / DSM 105126 / CIP 53.77 / LMG 1025 / NCDC KC755 / 5377).